The primary structure comprises 50 residues: Cuticle protein CP498 (50 aa).

Tandem repeats lie at residues 6–23 and 30–47.

In terms of tissue distribution, calcified shell.

This is Cuticle protein CP498 from Cancer pagurus (Rock crab).